Reading from the N-terminus, the 203-residue chain is DNA-directed RNA polymerase subunit gamma (203 aa).

Residues C34, C36, C49, and C52 each contribute to the Zn(2+) site.

It belongs to the RNA polymerase beta' chain family. RpoC1 subfamily. As to quaternary structure, in cyanobacteria the RNAP catalytic core is composed of 2 alpha, 1 beta, 1 beta', 1 gamma and 1 omega subunit. When a sigma factor is associated with the core the holoenzyme is formed, which can initiate transcription. Zn(2+) is required as a cofactor.

It catalyses the reaction RNA(n) + a ribonucleoside 5'-triphosphate = RNA(n+1) + diphosphate. DNA-dependent RNA polymerase catalyzes the transcription of DNA into RNA using the four ribonucleoside triphosphates as substrates. This chain is DNA-directed RNA polymerase subunit gamma (rpoC1), found in Fischerella muscicola.